The sequence spans 464 residues: Soluble pyridine nucleotide transhydrogenase (464 aa).

35–44 serves as a coordination point for FAD; sequence DSRRQVGGNC.

The protein belongs to the class-I pyridine nucleotide-disulfide oxidoreductase family. FAD serves as cofactor.

It is found in the cytoplasm. It catalyses the reaction NAD(+) + NADPH = NADH + NADP(+). Conversion of NADPH, generated by peripheral catabolic pathways, to NADH, which can enter the respiratory chain for energy generation. The protein is Soluble pyridine nucleotide transhydrogenase of Pseudomonas putida (strain W619).